The sequence spans 356 residues: Histidinol-phosphate aminotransferase (356 aa).

Lys214 carries the N6-(pyridoxal phosphate)lysine modification.

The protein belongs to the class-II pyridoxal-phosphate-dependent aminotransferase family. Histidinol-phosphate aminotransferase subfamily. In terms of assembly, homodimer. The cofactor is pyridoxal 5'-phosphate.

The enzyme catalyses L-histidinol phosphate + 2-oxoglutarate = 3-(imidazol-4-yl)-2-oxopropyl phosphate + L-glutamate. Its pathway is amino-acid biosynthesis; L-histidine biosynthesis; L-histidine from 5-phospho-alpha-D-ribose 1-diphosphate: step 7/9. The polypeptide is Histidinol-phosphate aminotransferase (Aromatoleum aromaticum (strain DSM 19018 / LMG 30748 / EbN1) (Azoarcus sp. (strain EbN1))).